The following is a 242-amino-acid chain: Biosynthetic peptidoglycan transglycosylase (242 aa).

Residues 19–39 (LMVVLAIFWGGGIALFSVAPV) form a helical membrane-spanning segment.

This sequence belongs to the glycosyltransferase 51 family.

It localises to the cell inner membrane. It catalyses the reaction [GlcNAc-(1-&gt;4)-Mur2Ac(oyl-L-Ala-gamma-D-Glu-L-Lys-D-Ala-D-Ala)](n)-di-trans,octa-cis-undecaprenyl diphosphate + beta-D-GlcNAc-(1-&gt;4)-Mur2Ac(oyl-L-Ala-gamma-D-Glu-L-Lys-D-Ala-D-Ala)-di-trans,octa-cis-undecaprenyl diphosphate = [GlcNAc-(1-&gt;4)-Mur2Ac(oyl-L-Ala-gamma-D-Glu-L-Lys-D-Ala-D-Ala)](n+1)-di-trans,octa-cis-undecaprenyl diphosphate + di-trans,octa-cis-undecaprenyl diphosphate + H(+). Its pathway is cell wall biogenesis; peptidoglycan biosynthesis. Functionally, peptidoglycan polymerase that catalyzes glycan chain elongation from lipid-linked precursors. In Escherichia coli O81 (strain ED1a), this protein is Biosynthetic peptidoglycan transglycosylase.